We begin with the raw amino-acid sequence, 158 residues long: EPGPSSDLTTLTTKFAAKGLTPSDLTVLSGGHTIGQSECQFFKTRIYNDTNIDTNFATSRQANCPFSAGGETNLAPLDSLTPNRFDNNYYKDLVSNRGLLHSDQVLFNGGSQDTLVRTYSTNNVKFFSDFAAAIVKMSKISPLTGIAGEIRKNCRVIN.

A substrate-binding site is contributed by proline 2. Histidine 32 is a heme b binding site. Residue threonine 33 coordinates Ca(2+). Residues cysteine 39 and cysteine 64 are joined by a disulfide bond. Asparagine 48 carries an N-linked (GlcNAc...) asparagine glycan. Ca(2+) is bound by residues aspartate 78, threonine 81, and aspartate 86.

It belongs to the peroxidase family. Classical plant (class III) peroxidase subfamily. It depends on Ca(2+) as a cofactor. Heme b serves as cofactor.

The enzyme catalyses 2 a phenolic donor + H2O2 = 2 a phenolic radical donor + 2 H2O. Functionally, removal of H(2)O(2), oxidation of toxic reductants, biosynthesis and degradation of lignin, suberization, auxin catabolism, response to environmental stresses such as wounding, pathogen attack and oxidative stress. These functions might be dependent on each isozyme/isoform in each plant tissue. This Lupinus polyphyllus (Large-leaved lupine) protein is Peroxidase.